The following is a 1160-amino-acid chain: Carbamoyl phosphate synthase arginine-specific large chain, mitochondrial (1160 aa).

The carboxyphosphate synthetic domain stretch occupies residues 81–478; the sequence is AEHEKVKKVV…SLQKALRQVD (398 aa). Positions 208, 248, 254, 255, 285, 287, 292, 318, 319, 320, 361, and 375 each coordinate ATP. The ATP-grasp 1 domain maps to 212 to 404; it reads AKALNEINIP…LAYTAAKIAL (193 aa). Residues glutamine 361, glutamate 375, and asparagine 377 each contribute to the Mg(2+) site. The Mn(2+) site is built by glutamine 361, glutamate 375, and asparagine 377. An oligomerization domain region spans residues 479 to 623; sequence PSFLGFMAMP…YTSYNASSHD (145 aa). The interval 624–1012 is carbamoyl phosphate synthetic domain; sequence IDFNEHGTMV…AYWAALQSTQ (389 aa). One can recognise an ATP-grasp 2 domain in the interval 748 to 946; sequence SQILDKIGVD…FIDVATRSII (199 aa). ATP-binding residues include arginine 784, lysine 823, isoleucine 825, glutamate 830, glycine 855, valine 856, histidine 857, serine 858, glutamine 898, and glutamate 917. 3 residues coordinate Mg(2+): glutamine 898, glutamate 917, and asparagine 919. Residues glutamine 898, glutamate 917, and asparagine 919 each contribute to the Mn(2+) site. Positions 1013-1144 are allosteric domain; that stretch reads NFKIPLPGQG…PSVLSEKKEM (132 aa). An MGS-like domain is found at 1014 to 1160; that stretch reads FKIPLPGQGI…WSEWIGSHDL (147 aa).

The protein belongs to the CarB family. Heterodimer composed of 2 chains; the small (or glutamine) chain promotes the hydrolysis of glutamine to ammonia, which is used by the large (or ammonia) chain to synthesize carbamoyl phosphate. Mg(2+) serves as cofactor. Requires Mn(2+) as cofactor.

The protein localises to the mitochondrion. It catalyses the reaction hydrogencarbonate + L-glutamine + 2 ATP + H2O = carbamoyl phosphate + L-glutamate + 2 ADP + phosphate + 2 H(+). The enzyme catalyses hydrogencarbonate + NH4(+) + 2 ATP = carbamoyl phosphate + 2 ADP + phosphate + 2 H(+). Its pathway is amino-acid biosynthesis; L-arginine biosynthesis; carbamoyl phosphate from bicarbonate: step 1/1. Large subunit of the arginine-specific carbamoyl phosphate synthase (CPSase). CPSase catalyzes the formation of carbamoyl phosphate from the ammonia moiety of glutamine, hydrogencarbonate, and phosphate donated by ATP, the first step of the arginine biosynthetic pathway. The large subunit (synthetase) binds the substrates ammonia (free or transferred from glutamine from the small subunit), hydrogencarbonate and ATP and carries out an ATP-coupled ligase reaction, activating hydrogencarbonate by forming carboxy phosphate which reacts with ammonia to form carbamoyl phosphate. The sequence is that of Carbamoyl phosphate synthase arginine-specific large chain, mitochondrial (arg4) from Schizosaccharomyces pombe (strain 972 / ATCC 24843) (Fission yeast).